We begin with the raw amino-acid sequence, 277 residues long: Inhibition of morphological differentiation protein (277 aa).

Mg(2+)-binding residues include Asp18, Asp20, and Asp192.

Belongs to the HAD-like hydrolase superfamily. SerB family.

This chain is Inhibition of morphological differentiation protein, found in Streptomyces azureus.